The primary structure comprises 302 residues: Geranylgeranyl diphosphate synthase (302 aa).

Isopentenyl diphosphate-binding residues include Lys-53, Arg-56, and His-87. The Mg(2+) site is built by Asp-94 and Asp-100. Residue Arg-105 participates in (2E,6E)-farnesyl diphosphate binding. Position 106 (Arg-106) interacts with isopentenyl diphosphate. (2E,6E)-farnesyl diphosphate contacts are provided by Lys-189, Thr-190, and Gln-227.

Belongs to the FPP/GGPP synthase family. The cofactor is Mg(2+).

It catalyses the reaction isopentenyl diphosphate + (2E,6E)-farnesyl diphosphate = (2E,6E,10E)-geranylgeranyl diphosphate + diphosphate. It participates in isoprenoid biosynthesis; geranylgeranyl diphosphate biosynthesis; geranylgeranyl diphosphate from farnesyl diphosphate and isopentenyl diphosphate: step 1/1. Catalyzes the condensation of farnesyl diphosphate (FPP) and isopentenyl diphosphate (IPP) to yield geranylgeranyl diphosphate (GGPP) needed for biosynthesis of carotenoids and diterpenes. In Pantoea ananas (Erwinia uredovora), this protein is Geranylgeranyl diphosphate synthase (crtE).